A 251-amino-acid polypeptide reads, in one-letter code: L-ascorbate peroxidase 2, cytosolic (251 aa).

His-43 functions as the Proton acceptor in the catalytic mechanism. A disordered region spans residues 113–137 (EVPFHPGRQDKPEPPPEGRLPDATQ). Over residues 119–132 (GRQDKPEPPPEGRL) the composition is skewed to basic and acidic residues. Position 164 (His-164) interacts with heme b. 5 residues coordinate K(+): Thr-165, Thr-181, Asn-183, Ile-186, and Asp-188.

Belongs to the peroxidase family. Ascorbate peroxidase subfamily. Heme b is required as a cofactor. Expressed in aerial vegetative parts and reproductive organs. Expressed in roots, leaves, stems and flowers. Expressed in young leaves, internodes, blade ears, stems and anthers.

The protein resides in the cytoplasm. The catalysed reaction is L-ascorbate + H2O2 = L-dehydroascorbate + 2 H2O. With respect to regulation, inhibited by p-chloromercuriphenylsulfonic acid (CMPSA). Its function is as follows. Plays a key role in hydrogen peroxide removal. Plays an important role in plant growth and development by protecting the seedlings from abiotic stresses through scavenging reactive oxygen species. Required for pollen viability. This chain is L-ascorbate peroxidase 2, cytosolic, found in Oryza sativa subsp. japonica (Rice).